Reading from the N-terminus, the 1215-residue chain is Cellulose synthase-like protein D4 (1215 aa).

Disordered regions lie at residues 24–46 and 206–231; these read GGDA…SLGS and SDTD…ERDQ. Residues 207 to 222 are compositionally biased toward acidic residues; it reads DTDESDSVTDDDDDEA. 2 helical membrane passes run 321–341 and 352–372; these read AILS…GFFL and AVWL…SWLL. Residues aspartate 452 and aspartate 905 contribute to the active site. Helical transmembrane passes span 988–1008, 1014–1034, 1060–1080, 1114–1134, 1147–1167, and 1177–1197; these read VFLL…KFIV, TFLA…LLEI, PAAV…SFTL, LMVP…VAAA, LLGG…FAKG, and TIVF…WVYI.

Belongs to the glycosyltransferase 2 family. Plant cellulose synthase-like D subfamily.

It localises to the golgi apparatus membrane. Functionally, thought to be a Golgi-localized beta-glycan synthase that polymerize the backbones of noncellulosic polysaccharides (hemicelluloses) of plant cell wall. This chain is Cellulose synthase-like protein D4 (CSLD4), found in Oryza sativa subsp. japonica (Rice).